An 88-amino-acid polypeptide reads, in one-letter code: EMBRYO SURROUNDING FACTOR 1-like protein 3 (88 aa).

The first 22 residues, 1–22, serve as a signal peptide directing secretion; sequence MKLSQIALICIVIASLFAMHEC. Intrachain disulfides connect Cys41-Cys56, Cys54-Cys80, and Cys57-Cys67.

It belongs to the MEG family. As to expression, expressed in stems, leaves and flowers.

This chain is EMBRYO SURROUNDING FACTOR 1-like protein 3 (ESFL3), found in Arabidopsis thaliana (Mouse-ear cress).